A 745-amino-acid chain; its full sequence is Meiotic driver SPOK3 (745 aa).

A coiled-coil region spans residues lysine 4–glutamate 34. Disordered stretches follow at residues glutamate 173–glycine 222 and leucine 407–glutamine 487. Positions threonine 188–glutamine 197 are enriched in basic and acidic residues. 2 stretches are compositionally biased toward polar residues: residues lysine 208 to glutamine 217 and serine 409 to threonine 422. Positions serine 214 to tryptophan 325 are required for antidote activity. Residues alanine 466–serine 482 show a composition bias toward basic and acidic residues. Positions glutamine 491 to glycine 745 are required for poison activity.

It localises to the cytoplasm. The protein localises to the nucleus. Promotes unequal transmission of alleles from the parental zygote to progeny spores by acting as poison/antidote system, leading to poisoning of progeny that do not inherit the allele. May possess DNA nuclease activity that leads to spore killing, and a kinase activity that confers resistance to the nuclease activity. This is Meiotic driver SPOK3 from Podospora anserina (Pleurage anserina).